We begin with the raw amino-acid sequence, 289 residues long: uncharacterized protein (289 aa).

The disordered stretch occupies residues 268–289 (SDDGYETQWSDGPYSIPSGLSD).

This is an uncharacterized protein from Zea mays (Maize).